Reading from the N-terminus, the 1545-residue chain is ATP-binding cassette sub-family C member 2 (1545 aa).

Topologically, residues 1 to 27 (MLEKFCNSTFWNSSFLDSPEADLPLCF) are extracellular. 2 N-linked (GlcNAc...) asparagine glycosylation sites follow: Asn-7 and Asn-12. A helical membrane pass occupies residues 28 to 48 (EQTVLVWIPLGYLWLLAPWQL). The Cytoplasmic segment spans residues 49-68 (LHVYKSRTKRSSTTKLYLAK). Residues 69–89 (QVFVGFLLILAAIELALVLTE) form a helical membrane-spanning segment. The Extracellular segment spans residues 90-93 (DSGQ). A helical transmembrane segment spans residues 94-114 (ATVPAVRYTNPSLYLGTWLLV). The Cytoplasmic portion of the chain corresponds to 115 to 126 (LLIQYSRQWCVQ). Residues 127–147 (KNSWFLSLFWILSILCGTFQF) form a helical membrane-spanning segment. Residues 148-165 (QTLIRTLLQGDNSNLAYS) lie on the Extracellular side of the membrane. Residues 166-186 (CLFFISYGFQILILIFSAFSE) form a helical membrane-spanning segment. Over 187–313 (NNESSNNPSS…DVPKSWLMKA (127 aa)) the chain is Cytoplasmic. A disordered region spans residues 253 to 284 (ARRALQRRQEKSSQQNSGARLPGLNKNQSQSQ). A phosphoserine mark is found at Ser-281 and Ser-283. A helical transmembrane segment spans residues 314 to 334 (LFKTFYMVLLKSFLLKLVNDI). Positions 322–605 (LLKSFLLKLV…LPMMISSMLQ (284 aa)) constitute an ABC transmembrane type-1 1 domain. Over 335-360 (FTFVSPQLLKLLISFASDRDTYLWIG) the chain is Extracellular. A helical membrane pass occupies residues 361–381 (YLCAILLFTAALIQSFCLQCY). Over 382 to 437 (FQLCFKLGVKVRTAIMASVYKKALTLSNLARKEYTVGETVNLMSVDAQKLMDVTNF) the chain is Cytoplasmic. The helical transmembrane segment at 438-458 (MHMLWSSVLQIVLSIFFLWRE) threads the bilayer. The Extracellular segment spans residues 459–461 (LGP). A helical membrane pass occupies residues 462 to 482 (SVLAGVGVMVLVIPINAILST). Topologically, residues 483 to 544 (KSKTIQVKNM…NLLAFSQLQC (62 aa)) are cytoplasmic. The chain crosses the membrane as a helical span at residues 545-565 (VVIFVFQLTPVLVSVVTFSVY). The Extracellular portion of the chain corresponds to 566–587 (VLVDSNNILDAQKAFTSITLFN). A helical membrane pass occupies residues 588-608 (ILRFPLSMLPMMISSMLQASV). At 609-971 (STERLEKYLG…VKFSIYLEYL (363 aa)) the chain is on the cytoplasmic side. Residues 637–861 (MQFSEASFTW…KGEFAKNLKT (225 aa)) form the ABC transporter 1 domain. Position 671 to 678 (671 to 678 (GPVGSGKS)) interacts with ATP. Residues Ser-878, Ser-926, Ser-930, and Ser-938 each carry the phosphoserine modification. Residues 972 to 992 (QAIGLFSIFFIILAFVMNSVA) form a helical membrane-spanning segment. Residues 979–1264 (IFFIILAFVM…LVRMTSEIET (286 aa)) enclose the ABC transmembrane type-1 2 domain. At 993–1033 (FIGSNLWLSAWTSDSKIFNSTDYPASQRDMRVGVYGALGLA) the chain is on the extracellular side. N-linked (GlcNAc...) asparagine glycosylation occurs at Asn-1011. The chain crosses the membrane as a helical span at residues 1034 to 1054 (QGIFVFIAHFWSAFGFVHASN). At 1055–1097 (ILHKQLLNNILRAPMRFFDTTPTGRIVNRFAGDISTVDDTLPQ) the chain is on the cytoplasmic side. Residues 1098–1118 (SLRSWITCFLGIISTLVMICM) traverse the membrane as a helical segment. Ala-1119 is a topological domain (extracellular). A helical membrane pass occupies residues 1120–1140 (TPVFTIIVIPLGIIYVSVQMF). Topologically, residues 1141-1211 (YVSTSRQLRR…TSNRWLAIRL (71 aa)) are cytoplasmic. The helical transmembrane segment at 1212–1232 (ELVGNLTVFFSALMMVIYRDT) threads the bilayer. At 1233-1234 (LS) the chain is on the extracellular side. A helical membrane pass occupies residues 1235–1255 (GDTVGFVLSNALNITQTLNWL). At 1256 to 1545 (VRMTSEIETN…GIENVNSTKF (290 aa)) the chain is on the cytoplasmic side. In terms of domain architecture, ABC transporter 2 spans 1300–1534 (IQFNNYQVRY…PGPFYFMAKE (235 aa)). 1334-1341 (GRTGAGKS) is an ATP binding site. Phosphoserine is present on Ser-1438.

It belongs to the ABC transporter superfamily. ABCC family. Conjugate transporter (TC 3.A.1.208) subfamily. In terms of tissue distribution, expressed by polarized cells in liver, kidney and intestine. The highest expression is found in liver. Expressed in small intestine.

The protein resides in the apical cell membrane. The catalysed reaction is ATP + H2O + xenobioticSide 1 = ADP + phosphate + xenobioticSide 2.. It catalyses the reaction an S-substituted glutathione(in) + ATP + H2O = an S-substituted glutathione(out) + ADP + phosphate + H(+). It carries out the reaction taurolithocholate 3-sulfate(in) + ATP + H2O = taurolithocholate 3-sulfate(out) + ADP + phosphate + H(+). The enzyme catalyses leukotriene C4(in) + ATP + H2O = leukotriene C4(out) + ADP + phosphate + H(+). The catalysed reaction is 17beta-estradiol 17-O-(beta-D-glucuronate)(in) + ATP + H2O = 17beta-estradiol 17-O-(beta-D-glucuronate)(out) + ADP + phosphate + H(+). It catalyses the reaction (4Z,15Z)-bilirubin IXalpha C8-beta-D-glucuronoside(in) + ATP + H2O = (4Z,15Z)-bilirubin IXalpha C8-beta-D-glucuronoside(out) + ADP + phosphate + H(+). It carries out the reaction (4Z,15Z)-bilirubin IXalpha C8,C12-beta-D-bisglucuronoside(in) + ATP + H2O = (4Z,15Z)-bilirubin IXalpha C8,C12-beta-D-bisglucuronoside(out) + ADP + phosphate + H(+). Functionally, ATP-dependent transporter of the ATP-binding cassette (ABC) family that binds and hydrolyzes ATP to enable active transport of various substrates including many drugs, toxicants and endogenous compound across cell membranes. Transports a wide variety of conjugated organic anions such as sulfate-, glucuronide- and glutathione (GSH)-conjugates of endo- and xenobiotics substrates. Mediates hepatobiliary excretion of mono- and bis-glucuronidated bilirubin molecules and therefore play an important role in bilirubin detoxification. Also mediates hepatobiliary excretion of others glucuronide conjugates such as 17beta-estradiol 17-glucosiduronic acid and leukotriene C4. Transports sulfated bile salt such as taurolithocholate sulfate. Transports various anticancer drugs, such as anthracycline, vinca alkaloid and methotrexate and HIV-drugs such as protease inhibitors. Confers resistance to several anti-cancer drugs including cisplatin, doxorubicin, epirubicin, methotrexate, etoposide and vincristine. The chain is ATP-binding cassette sub-family C member 2 from Homo sapiens (Human).